Here is a 343-residue protein sequence, read N- to C-terminus: Holliday junction branch migration complex subunit RuvB (343 aa).

A disordered region spans residues 1-26 (MKEKILTFSSDPSSPVTRHETEEDTG). The interval 3–193 (EKILTFSSDP…FGIFRKFDFY (191 aa)) is large ATPase domain (RuvB-L). The segment covering 7–16 (TFSSDPSSPV) has biased composition (polar residues). ATP contacts are provided by residues Leu32, Arg33, Gly74, Lys77, Thr78, Thr79, 140–142 (EDF), Arg183, Tyr193, and Arg230. A Mg(2+)-binding site is contributed by Thr78. The small ATPAse domain (RuvB-S) stretch occupies residues 194-264 (SRQDLARIVS…AIDDALALEG (71 aa)). Positions 267 to 343 (EKGLTGLDRS…YRHLGVQWRG (77 aa)) are head domain (RuvB-H). Residues Arg322 and Arg327 each coordinate DNA.

Belongs to the RuvB family. In terms of assembly, homohexamer. Forms an RuvA(8)-RuvB(12)-Holliday junction (HJ) complex. HJ DNA is sandwiched between 2 RuvA tetramers; dsDNA enters through RuvA and exits via RuvB. An RuvB hexamer assembles on each DNA strand where it exits the tetramer. Each RuvB hexamer is contacted by two RuvA subunits (via domain III) on 2 adjacent RuvB subunits; this complex drives branch migration. In the full resolvosome a probable DNA-RuvA(4)-RuvB(12)-RuvC(2) complex forms which resolves the HJ.

It localises to the cytoplasm. It carries out the reaction ATP + H2O = ADP + phosphate + H(+). The RuvA-RuvB-RuvC complex processes Holliday junction (HJ) DNA during genetic recombination and DNA repair, while the RuvA-RuvB complex plays an important role in the rescue of blocked DNA replication forks via replication fork reversal (RFR). RuvA specifically binds to HJ cruciform DNA, conferring on it an open structure. The RuvB hexamer acts as an ATP-dependent pump, pulling dsDNA into and through the RuvAB complex. RuvB forms 2 homohexamers on either side of HJ DNA bound by 1 or 2 RuvA tetramers; 4 subunits per hexamer contact DNA at a time. Coordinated motions by a converter formed by DNA-disengaged RuvB subunits stimulates ATP hydrolysis and nucleotide exchange. Immobilization of the converter enables RuvB to convert the ATP-contained energy into a lever motion, pulling 2 nucleotides of DNA out of the RuvA tetramer per ATP hydrolyzed, thus driving DNA branch migration. The RuvB motors rotate together with the DNA substrate, which together with the progressing nucleotide cycle form the mechanistic basis for DNA recombination by continuous HJ branch migration. Branch migration allows RuvC to scan DNA until it finds its consensus sequence, where it cleaves and resolves cruciform DNA. The sequence is that of Holliday junction branch migration complex subunit RuvB from Desulfosudis oleivorans (strain DSM 6200 / JCM 39069 / Hxd3) (Desulfococcus oleovorans).